A 146-amino-acid chain; its full sequence is VHLTPEEKVAVTTLWGKVNVDEVGGEALGRLLVVYPWTQRFFESFGDLSNPDAVMGNPKVKAHGKKVLGAFSDGLNHLDNLKGTFAQLSELHCDKLHVDPENFKLLGNVLVCVLAHHFGKEFTPQVQAAYQKVVAGVANALAHKYH.

Val1 is modified (N-acetylvaline). The 145-residue stretch at 2 to 146 (HLTPEEKVAV…VANALAHKYH (145 aa)) folds into the Globin domain. Thr12 is modified (phosphothreonine). Ser44 is subject to Phosphoserine. Residue Lys59 is modified to N6-acetyllysine. His63 contributes to the heme b binding site. Residue Lys82 is modified to N6-acetyllysine. His92 is a heme b binding site. Position 93 is an S-nitrosocysteine (Cys93). At Lys144 the chain carries N6-acetyllysine.

Belongs to the globin family. In terms of assembly, heterotetramer of two alpha chains and two beta chains. In terms of tissue distribution, red blood cells.

Its function is as follows. Involved in oxygen transport from the lung to the various peripheral tissues. In Cercocebus atys (Sooty mangabey), this protein is Hemoglobin subunit beta (HBB).